The following is a 149-amino-acid chain: UPF0756 membrane protein Nther_1957 (149 aa).

4 helical membrane-spanning segments follow: residues 5 to 25 (IVVL…LVAT), 52 to 72 (LGIL…DIMP), 85 to 105 (LIAV…VELL), and 111 to 131 (VMVG…GVPA).

It belongs to the UPF0756 family.

The protein localises to the cell membrane. The polypeptide is UPF0756 membrane protein Nther_1957 (Natranaerobius thermophilus (strain ATCC BAA-1301 / DSM 18059 / JW/NM-WN-LF)).